A 266-amino-acid chain; its full sequence is MRGAFYTAIALLIGRSQTAKEIDQTDVSKPYLNVVAIGGKGTKTTPKRYLRDGLAHSATNEERVKANVLSKDAMDLAAEGKDWLSLRLGTVDHSHTPQLKRKVDRLPAITQRRIEKKLTTAKQRVYDRQVKLDDPRYPEYLEMHHNFLDIPKMPPGMSLAEAVVMYNMVNWQSGSIPTGKKATNHLSHLAGRSPLRDVNKALDPTFVAKASEDQLRNAYFVKLQIMYAKVYDFCHSNGCTKKELVSPLEQKVEAKETKLLLPLFKN.

An N-terminal signal peptide occupies residues 1 to 18 (MRGAFYTAIALLIGRSQT). The RxLR-dEER signature appears at 48–63 (RYLRDGLAHSATNEER).

The protein belongs to the RxLR effector family.

It localises to the secreted. It is found in the host nucleus. In terms of biological role, secreted effector that dos not suppress the host cell death induced by cell death-inducing proteins. The sequence is that of Secreted RxLR effector protein 128 from Plasmopara viticola (Downy mildew of grapevine).